A 567-amino-acid polypeptide reads, in one-letter code: Potassium-transporting ATPase potassium-binding subunit (567 aa).

12 consecutive transmembrane segments (helical) span residues Leu-11–Leu-31, Ala-67–Trp-87, Gly-136–Val-156, Leu-179–Val-199, Phe-255–Phe-275, Val-286–Ala-306, Phe-333–Val-353, Leu-363–Gly-383, Gly-385–Gly-405, Leu-422–Val-442, Leu-489–Leu-509, and Leu-532–Ala-552.

Belongs to the KdpA family. The system is composed of three essential subunits: KdpA, KdpB and KdpC.

The protein localises to the cell inner membrane. In terms of biological role, part of the high-affinity ATP-driven potassium transport (or Kdp) system, which catalyzes the hydrolysis of ATP coupled with the electrogenic transport of potassium into the cytoplasm. This subunit binds the periplasmic potassium ions and delivers the ions to the membrane domain of KdpB through an intramembrane tunnel. The protein is Potassium-transporting ATPase potassium-binding subunit of Laribacter hongkongensis (strain HLHK9).